The following is a 67-amino-acid chain: Small ribosomal subunit protein bS21 (67 aa).

The protein belongs to the bacterial ribosomal protein bS21 family.

The protein is Small ribosomal subunit protein bS21 of Acidiphilium cryptum (strain JF-5).